A 141-amino-acid polypeptide reads, in one-letter code: Nucleoside diphosphate kinase (141 aa).

ATP is bound by residues Lys11, Phe59, Arg87, Thr93, Arg104, and Asn114. The active-site Pros-phosphohistidine intermediate is His117.

This sequence belongs to the NDK family. Mg(2+) serves as cofactor.

The protein localises to the cytoplasm. The enzyme catalyses a 2'-deoxyribonucleoside 5'-diphosphate + ATP = a 2'-deoxyribonucleoside 5'-triphosphate + ADP. It catalyses the reaction a ribonucleoside 5'-diphosphate + ATP = a ribonucleoside 5'-triphosphate + ADP. Major role in the synthesis of nucleoside triphosphates other than ATP. The ATP gamma phosphate is transferred to the NDP beta phosphate via a ping-pong mechanism, using a phosphorylated active-site intermediate. The sequence is that of Nucleoside diphosphate kinase from Staphylothermus marinus (strain ATCC 43588 / DSM 3639 / JCM 9404 / F1).